The chain runs to 291 residues: Pyridoxal 5'-phosphate synthase subunit PdxS (291 aa).

D23 lines the D-ribose 5-phosphate pocket. K80 functions as the Schiff-base intermediate with D-ribose 5-phosphate in the catalytic mechanism. Residue G152 coordinates D-ribose 5-phosphate. A D-glyceraldehyde 3-phosphate-binding site is contributed by R164. Residues G213 and 234–235 (GS) each bind D-ribose 5-phosphate.

It belongs to the PdxS/SNZ family. As to quaternary structure, in the presence of PdxT, forms a dodecamer of heterodimers.

The catalysed reaction is aldehydo-D-ribose 5-phosphate + D-glyceraldehyde 3-phosphate + L-glutamine = pyridoxal 5'-phosphate + L-glutamate + phosphate + 3 H2O + H(+). The protein operates within cofactor biosynthesis; pyridoxal 5'-phosphate biosynthesis. Functionally, catalyzes the formation of pyridoxal 5'-phosphate from ribose 5-phosphate (RBP), glyceraldehyde 3-phosphate (G3P) and ammonia. The ammonia is provided by the PdxT subunit. Can also use ribulose 5-phosphate and dihydroxyacetone phosphate as substrates, resulting from enzyme-catalyzed isomerization of RBP and G3P, respectively. This Bifidobacterium longum (strain NCC 2705) protein is Pyridoxal 5'-phosphate synthase subunit PdxS.